The sequence spans 423 residues: Keratin, type I cytoskeletal 18 (423 aa).

Serine 2 is subject to N-acetylserine. The tract at residues 2–71 (SFTTRSTTFS…GLAGMGGIQT (70 aa)) is head. Phosphoserine occurs at positions 7, 11, 16, and 19. Phosphoserine; alternate is present on residues serine 31 and serine 32. O-linked (GlcNAc) serine; alternate glycans are attached at residues serine 31 and serine 32. The residue at position 35 (serine 35) is a Phosphoserine. Residue tyrosine 37 is modified to Phosphotyrosine. Serine 43 is subject to Phosphoserine. At arginine 46 the chain carries Omega-N-methylarginine. Serine 50 bears the Phosphoserine; alternate mark. The O-linked (GlcNAc) serine; alternate glycan is linked to serine 50. Phosphoserine; by MAPKAPK2 and MAPKAPK3 is present on serine 52. Phosphoserine is present on residues serine 57 and serine 60. The tract at residues 62 to 366 (GLAGMGGIQT…EALLNIKVKL (305 aa)) is necessary for interaction with PNN. An interaction with TRADD region spans residues 69-121 (IQTEKETMQDLNDRLASYLDKVKSLETENRRLESKIREHLEKKGPQGVRDWGH). Positions 72 to 107 (EKETMQDLNDRLASYLDKVKSLETENRRLESKIREH) are coil 1A. The region spanning 72–384 (EKETMQDLND…RLLEDGEDFS (313 aa)) is the IF rod domain. Lysine 73 is covalently cross-linked (Glycyl lysine isopeptide (Lys-Gly) (interchain with G-Cter in SUMO2)). Phosphoserine is present on residues serine 85 and serine 92. The tract at residues 108 to 125 (LEKKGPQGVRDWGHYFKI) is linker 1. The residue at position 124 (lysine 124) is an N6-acetyllysine. Positions 126 to 217 (IEDLRAQIFA…KNHEEEVQGL (92 aa)) are coil 1B. 2 positions are modified to phosphoserine: serine 137 and serine 170. Positions 218-241 (EAQIASSGLTVEVDAPKSQDLSKI) are linker 12. The tract at residues 236-384 (QDLSKIMADI…RLLEDGEDFS (149 aa)) is interaction with DNAJB6. A Glycyl lysine isopeptide (Lys-Gly) (interchain with G-Cter in SUMO2) cross-link involves residue lysine 240. A coil 2 region spans residues 242-380 (MADIRAQYEA…ATYRRLLEDG (139 aa)). Threonine 295 carries the post-translational modification Phosphothreonine. Serine 316 bears the Phosphoserine mark. Residues lysine 363 and lysine 365 each participate in a glycyl lysine isopeptide (Lys-Gly) (interchain with G-Cter in SUMO2) cross-link. The segment at 381 to 423 (EDFSLNDALDSSNSMQTVQKTTTRKIVDGRVVSETNDTRVLRH) is tail. Serine 384, serine 391, serine 392, and serine 394 each carry phosphoserine. Threonine 397 is subject to Phosphothreonine.

This sequence belongs to the intermediate filament family. In terms of assembly, heterotetramer of two type I and two type II keratins. KRT18 associates with KRT8. Interacts with PLEC isoform 1C, when in a heterodimer with KRT8. Interacts with PNN and mutated CFTR. Interacts with YWHAE, YWHAH and YWHAZ only when phosphorylated. Interacts with the thrombin-antithrombin complex. Interacts with DNAJB6, TCHP and TRADD. Interacts with FAM83H. Interacts with EPPK1. Interacts with PKP1 and PKP2. In terms of processing, phosphorylation increases by IL-6. Post-translationally, proteolytically cleaved by caspases during epithelial cell apoptosis. Cleavage occurs at Asp-231 by either caspase-3, caspas-6 or caspase-7. O-GlcNAcylation increases solubility, and decreases stability by inducing proteasomal degradation. In terms of tissue distribution, expressed in endoderm, intestinal epithelial cells and in most extraembryonic tissues.

The protein resides in the nucleus matrix. It localises to the cytoplasm. The protein localises to the perinuclear region. It is found in the nucleus. Its subcellular location is the nucleolus. Its function is as follows. When phosphorylated, plays a role in filament reorganization. Involved in the delivery of mutated CFTR to the plasma membrane. Involved in the uptake of thrombin-antithrombin complexes by hepatic cells. Together with KRT8, is involved in interleukin-6 (IL-6)-mediated barrier protection. This Mus musculus (Mouse) protein is Keratin, type I cytoskeletal 18 (Krt18).